Consider the following 546-residue polypeptide: Protein FAM124A (546 aa).

Disordered stretches follow at residues 1–37 (MDPKAGGGGEEDDCVDSGAETGGSDYSHLSSTSSELS), 286–360 (FPKP…FQRS), and 488–546 (SSSS…EFYI). Positions 24–36 (SDYSHLSSTSSEL) are enriched in low complexity. Residues 286-302 (FPKPGRVHHASEKKRHS) are compositionally biased toward basic residues. Composition is skewed to polar residues over residues 304–324 (PLPSTAVPSHTPGSSQQSPLN) and 347–360 (ANSTPNPPWSFQRS). Positions 488–511 (SSSSATARAAPPAPSTSTLTDSSP) are enriched in low complexity.

It belongs to the FAM124 family.

This is Protein FAM124A (FAM124A) from Homo sapiens (Human).